The sequence spans 235 residues: MNKIAGTLFLLAGLAMAGCTTTEELGKPPALSPVGSGAEPTAMQAYHYPDRRQAHVSRYSLWSDRQSRLFTDPRALEVGDILTVVISINDKAKFENESERSRQATRNLGLAGTFAIGSATGSAEADADIGSGTSTVGSGATKRSEDMRLVIAAIVTERLPNGNLRISGTQEVRVNAELRVLTIAGLVRPADIGPNNTISYERIAEARISYGGRGRLTEVQQPPYGQQFLDTVLPF.

The signal sequence occupies residues 1-18; that stretch reads MNKIAGTLFLLAGLAMAG. Cysteine 19 carries N-palmitoyl cysteine lipidation. Residue cysteine 19 is the site of S-diacylglycerol cysteine attachment.

Belongs to the FlgH family. As to quaternary structure, the basal body constitutes a major portion of the flagellar organelle and consists of four rings (L,P,S, and M) mounted on a central rod.

The protein localises to the cell outer membrane. Its subcellular location is the bacterial flagellum basal body. Functionally, assembles around the rod to form the L-ring and probably protects the motor/basal body from shearing forces during rotation. This Chelativorans sp. (strain BNC1) protein is Flagellar L-ring protein.